Here is a 475-residue protein sequence, read N- to C-terminus: Sulfate adenylyltransferase subunit 1 (475 aa).

A tr-type G domain is found at 25–239 (KSLLRFLTCG…EVLETVEIQR (215 aa)). The G1 stretch occupies residues 34–41 (GSVDDGKS). 34-41 (GSVDDGKS) provides a ligand contact to GTP. The interval 92–96 (GITID) is G2. The G3 stretch occupies residues 113-116 (DTPG). Residues 113 to 117 (DTPGH) and 168 to 171 (NKMD) contribute to the GTP site. Residues 168 to 171 (NKMD) are G4. Residues 206-208 (SAL) are G5.

Belongs to the TRAFAC class translation factor GTPase superfamily. Classic translation factor GTPase family. CysN/NodQ subfamily. Heterodimer composed of CysD, the smaller subunit, and CysN.

It carries out the reaction sulfate + ATP + H(+) = adenosine 5'-phosphosulfate + diphosphate. The protein operates within sulfur metabolism; hydrogen sulfide biosynthesis; sulfite from sulfate: step 1/3. Functionally, with CysD forms the ATP sulfurylase (ATPS) that catalyzes the adenylation of sulfate producing adenosine 5'-phosphosulfate (APS) and diphosphate, the first enzymatic step in sulfur assimilation pathway. APS synthesis involves the formation of a high-energy phosphoric-sulfuric acid anhydride bond driven by GTP hydrolysis by CysN coupled to ATP hydrolysis by CysD. This Escherichia coli O9:H4 (strain HS) protein is Sulfate adenylyltransferase subunit 1.